The sequence spans 216 residues: Large ribosomal subunit protein uL1B (216 aa).

A Phosphoserine modification is found at serine 11.

The protein belongs to the universal ribosomal protein uL1 family. Component of the large ribosomal subunit (LSU). Mature yeast ribosomes consist of a small (40S) and a large (60S) subunit. The 40S small subunit contains 1 molecule of ribosomal RNA (18S rRNA) and at least 33 different proteins. The large 60S subunit contains 3 rRNA molecules (25S, 5.8S and 5S rRNA) and at least 46 different proteins. uL1 forms part of the L1 stalk.

It is found in the cytoplasm. Functionally, component of the ribosome, a large ribonucleoprotein complex responsible for the synthesis of proteins in the cell. The small ribosomal subunit (SSU) binds messenger RNAs (mRNAs) and translates the encoded message by selecting cognate aminoacyl-transfer RNA (tRNA) molecules. The large subunit (LSU) contains the ribosomal catalytic site termed the peptidyl transferase center (PTC), which catalyzes the formation of peptide bonds, thereby polymerizing the amino acids delivered by tRNAs into a polypeptide chain. The nascent polypeptides leave the ribosome through a tunnel in the LSU and interact with protein factors that function in enzymatic processing, targeting, and the membrane insertion of nascent chains at the exit of the ribosomal tunnel. uL1 forms part of the L1 stalk, a mobile element that plays a role in evacuating the exit-site tRNA. In Schizosaccharomyces pombe (strain 972 / ATCC 24843) (Fission yeast), this protein is Large ribosomal subunit protein uL1B (rpl101).